Reading from the N-terminus, the 173-residue chain is bZIP transcription factor 44 (173 aa).

The segment at 1–65 is disordered; it reads MNNKTEMGSS…SRMRKQKHLD (65 aa). Residues 8-22 are compositionally biased toward low complexity; it reads GSSTSGNCSSVSTTG. Residues 30–41 are compositionally biased toward basic and acidic residues; the sequence is SDLRQRDLIDER. Residues 39 to 102 enclose the bZIP domain; the sequence is DERKRKRKQS…VTIEAENDIL (64 aa). The interval 41 to 62 is basic motif; that stretch reads RKRKRKQSNRESARRSRMRKQK. Positions 67–81 are leucine-zipper; sequence LTAQVTHLRKENAQI.

As to quaternary structure, forms heterodimers with BZIP1, BZIP9, BZIP10, BZIP25 and BZIP63. Expressed in the micropylar endosperm and radicle tip in early germinating seeds.

It localises to the nucleus. In terms of biological role, transcription factor that binds to the DNA G-box motif 5'-CACGTG-3' of MAN7 promoter. Involved in the positive regulation of seed germination through MAN7 gene activation. MAN7 is required for both, loosening of the micropylar endosperm, and rupture of the seed coat in germinating seeds. This Arabidopsis thaliana (Mouse-ear cress) protein is bZIP transcription factor 44.